The primary structure comprises 252 residues: Cell division protein ZapD (252 aa).

Belongs to the ZapD family. Interacts with FtsZ.

Its subcellular location is the cytoplasm. Functionally, cell division factor that enhances FtsZ-ring assembly. Directly interacts with FtsZ and promotes bundling of FtsZ protofilaments, with a reduction in FtsZ GTPase activity. This Cupriavidus necator (strain ATCC 17699 / DSM 428 / KCTC 22496 / NCIMB 10442 / H16 / Stanier 337) (Ralstonia eutropha) protein is Cell division protein ZapD.